The primary structure comprises 512 residues: MVALRFFFFSSLLILLILSQALIMSVGSASQIRLSSTFSIQEATIEDIRVAFNEKRLTSKQLVELYLEAISKLNPILHAVIETNPDALIQAEIADRERDLKNTTKLPILHGVPVLLKDSISTKDKLNTTAGSFALLGSVVARDAGVVKRLRESGAVILGKASLSEWAHFRSFSIPDGWSARGLQGKNPYVLSANPSGSSSGSAISVTANLVAVSLGTETDGSILSPASQNSVVGIKPSVGLTSRAGVVPISLRQDSIGPICRTVSDAVHLLDAIVGYDPLDEATKTASEFIPEGGYKQFLTTSGLKGKRLGIVMKHSSLLDHHIKTLRREGAIVINNLTIPNIEVIVGGTDSGEEIALLAEFKMSLNAYLKELVKSPVRSLADVIAYNEEFAEQEKVKEWGQEVFLTAEATSGMGEKEKTALQKMKELSRNGIEKLIEENKLDAIVTLGSDLSSVLAIGGYPGINVPAGYDSGGVPYGISFGGLRFSEPKLIEIAFAFEQATLIRKPPKFIA.

Residues K117 and S198 each act as charge relay system in the active site. The Acyl-ester intermediate role is filled by S222.

This sequence belongs to the amidase family. Expressed in vasculature of roots, cotyledons, leaves and sepals.

The enzyme catalyses a monocarboxylic acid amide + H2O = a monocarboxylate + NH4(+). The chain is Probable amidase At4g34880 from Arabidopsis thaliana (Mouse-ear cress).